The sequence spans 321 residues: Mitochondrial thiamine pyrophosphate carrier 1 (321 aa).

Solcar repeat units lie at residues 12–110 (GSRQ…ISQM), 121–207 (PSSA…LKPV), and 216–311 (PLGS…AMGI). Helical transmembrane passes span 17–38 (VVVA…LDVI), 91–107 (LLYL…YTNI), 127–147 (FISG…LDLL), 182–199 (GLGA…LFFA), 213–231 (LPLP…ASVV), and 286–303 (GLTV…VTMW).

It belongs to the mitochondrial carrier (TC 2.A.29) family.

The protein resides in the mitochondrion inner membrane. Mitochondrial transporter that mediates uptake of thiamine pyrophosphate (ThPP) into mitochondria. The polypeptide is Mitochondrial thiamine pyrophosphate carrier 1 (TPC1) (Phaeosphaeria nodorum (strain SN15 / ATCC MYA-4574 / FGSC 10173) (Glume blotch fungus)).